Reading from the N-terminus, the 346-residue chain is D-erythrose-4-phosphate dehydrogenase (346 aa).

11–12 (RI) provides a ligand contact to NAD(+). Residues 163–165 (SCT), Arg-209, 222–223 (TK), and Arg-245 contribute to the substrate site. The active-site Nucleophile is the Cys-164. Asn-327 contributes to the NAD(+) binding site.

Belongs to the glyceraldehyde-3-phosphate dehydrogenase family. Epd subfamily. Homotetramer.

It localises to the cytoplasm. It carries out the reaction D-erythrose 4-phosphate + NAD(+) + H2O = 4-phospho-D-erythronate + NADH + 2 H(+). It functions in the pathway cofactor biosynthesis; pyridoxine 5'-phosphate biosynthesis; pyridoxine 5'-phosphate from D-erythrose 4-phosphate: step 1/5. Functionally, catalyzes the NAD-dependent conversion of D-erythrose 4-phosphate to 4-phosphoerythronate. The protein is D-erythrose-4-phosphate dehydrogenase of Vibrio vulnificus (strain YJ016).